The sequence spans 414 residues: Glucose-1-phosphate adenylyltransferase (414 aa).

Alpha-D-glucose 1-phosphate is bound by residues G164, 181–182 (EK), and S199.

Belongs to the bacterial/plant glucose-1-phosphate adenylyltransferase family. As to quaternary structure, homotetramer.

The catalysed reaction is alpha-D-glucose 1-phosphate + ATP + H(+) = ADP-alpha-D-glucose + diphosphate. It functions in the pathway glycan biosynthesis; glycogen biosynthesis. In terms of biological role, involved in the biosynthesis of ADP-glucose, a building block required for the elongation reactions to produce glycogen. Catalyzes the reaction between ATP and alpha-D-glucose 1-phosphate (G1P) to produce pyrophosphate and ADP-Glc. This chain is Glucose-1-phosphate adenylyltransferase, found in Kocuria rhizophila (strain ATCC 9341 / DSM 348 / NBRC 103217 / DC2201).